We begin with the raw amino-acid sequence, 295 residues long: GTP cyclohydrolase FolE2 (295 aa).

The protein belongs to the GTP cyclohydrolase IV family.

It carries out the reaction GTP + H2O = 7,8-dihydroneopterin 3'-triphosphate + formate + H(+). The protein operates within cofactor biosynthesis; 7,8-dihydroneopterin triphosphate biosynthesis; 7,8-dihydroneopterin triphosphate from GTP: step 1/1. Converts GTP to 7,8-dihydroneopterin triphosphate. This is GTP cyclohydrolase FolE2 from Pseudomonas putida (strain W619).